The sequence spans 176 residues: MAGKEVVILRIGHRPERDQRVTTHVALTGRALGACGMYLAASDKGVVQSVLDVAERWGGQFFCEDNIRWRTCIKDWKAAGGKVAHLTMYGINLPDIIEEIRPCEKLLVVVGAEKVPGEMYGLADYNVAVTGQPHSEIASLALFLDRYHDGREFAGEFPGAKIRIIPSRAGKQTEEL.

S-adenosyl-L-methionine-binding positions include leucine 86 and 111–115; that span reads GAEKV.

The protein belongs to the aTrm56 family. Homodimer.

The protein resides in the cytoplasm. The enzyme catalyses cytidine(56) in tRNA + S-adenosyl-L-methionine = 2'-O-methylcytidine(56) in tRNA + S-adenosyl-L-homocysteine + H(+). Its function is as follows. Specifically catalyzes the AdoMet-dependent 2'-O-ribose methylation of cytidine at position 56 in tRNAs. The sequence is that of tRNA (cytidine(56)-2'-O)-methyltransferase from Methanoregula boonei (strain DSM 21154 / JCM 14090 / 6A8).